We begin with the raw amino-acid sequence, 590 residues long: Arginine--tRNA ligase (590 aa).

A 'HIGH' region motif is present at residues 138-148 (ANPTGPLHIGH).

The protein belongs to the class-I aminoacyl-tRNA synthetase family. In terms of assembly, monomer.

The protein localises to the cytoplasm. It catalyses the reaction tRNA(Arg) + L-arginine + ATP = L-arginyl-tRNA(Arg) + AMP + diphosphate. The polypeptide is Arginine--tRNA ligase (Orientia tsutsugamushi (strain Ikeda) (Rickettsia tsutsugamushi)).